The following is a 134-amino-acid chain: Cytochrome b (134 aa).

3 helical membrane-spanning segments follow: residues 33–53 (FGSLLGVCLAVQILTGVFLAM), 77–98 (WVLRYLHANGASMFFICLYVHV), and 113–133 (WNVGILLLFAVMATAFMGYVL). Residues His83 and His97 each contribute to the heme b site.

Belongs to the cytochrome b family. In terms of assembly, the cytochrome bc1 complex contains 11 subunits: 3 respiratory subunits (MT-CYB, CYC1 and UQCRFS1), 2 core proteins (UQCRC1 and UQCRC2) and 6 low-molecular weight proteins (UQCRH/QCR6, UQCRB/QCR7, UQCRQ/QCR8, UQCR10/QCR9, UQCR11/QCR10 and a cleavage product of UQCRFS1). This cytochrome bc1 complex then forms a dimer. The cofactor is heme b.

Its subcellular location is the mitochondrion inner membrane. Functionally, component of the ubiquinol-cytochrome c reductase complex (complex III or cytochrome b-c1 complex) that is part of the mitochondrial respiratory chain. The b-c1 complex mediates electron transfer from ubiquinol to cytochrome c. Contributes to the generation of a proton gradient across the mitochondrial membrane that is then used for ATP synthesis. This chain is Cytochrome b (MT-CYB), found in Anoura caudifer (Hairy-legged long-tongued bat).